Consider the following 181-residue polypeptide: ATP synthase subunit b (181 aa).

A helical membrane pass occupies residues Leu-24–Val-44.

The protein belongs to the ATPase B chain family. F-type ATPases have 2 components, F(1) - the catalytic core - and F(0) - the membrane proton channel. F(1) has five subunits: alpha(3), beta(3), gamma(1), delta(1), epsilon(1). F(0) has three main subunits: a(1), b(2) and c(10-14). The alpha and beta chains form an alternating ring which encloses part of the gamma chain. F(1) is attached to F(0) by a central stalk formed by the gamma and epsilon chains, while a peripheral stalk is formed by the delta and b chains.

The protein localises to the cell membrane. Its function is as follows. F(1)F(0) ATP synthase produces ATP from ADP in the presence of a proton or sodium gradient. F-type ATPases consist of two structural domains, F(1) containing the extramembraneous catalytic core and F(0) containing the membrane proton channel, linked together by a central stalk and a peripheral stalk. During catalysis, ATP synthesis in the catalytic domain of F(1) is coupled via a rotary mechanism of the central stalk subunits to proton translocation. Functionally, component of the F(0) channel, it forms part of the peripheral stalk, linking F(1) to F(0). This chain is ATP synthase subunit b, found in Mycoplasma mycoides subsp. mycoides SC (strain CCUG 32753 / NCTC 10114 / PG1).